A 601-amino-acid chain; its full sequence is Secretogranin-2 (601 aa).

The signal sequence occupies residues 1–30 (MSSQRNYCLAGCLSSCILVILMSFSDAASF). The interval 89–109 (EQKDTQALSTDTAKSPTSDDE) is disordered. Residues 93–104 (TQALSTDTAKSP) are compositionally biased toward polar residues. The residue at position 151 (Y151) is a Sulfotyrosine. Residues 258–273 (VESQTQEELKESKEEV) are compositionally biased toward basic and acidic residues. Residues 258–307 (VESQTQEELKESKEEVEKTDDMEDEIKRSGLLGLQDEEPEKDTKEQESEN) form a disordered region.

This sequence belongs to the chromogranin/secretogranin protein family.

It is found in the secreted. Its function is as follows. Neuroendocrine protein of the granin family that regulates the biogenesis of secretory granules. The chain is Secretogranin-2 from Pelophylax ridibundus (Marsh frog).